The primary structure comprises 347 residues: Selenide, water dikinase (347 aa).

The active site involves Cys-17. ATP-binding positions include Lys-20 and 48 to 50 (TRD). A Mg(2+)-binding site is contributed by Asp-51. Residues Asp-68, Asp-91, and 139–141 (GHS) contribute to the ATP site. Asp-91 serves as a coordination point for Mg(2+). Residue Asp-227 participates in Mg(2+) binding.

It belongs to the selenophosphate synthase 1 family. Class I subfamily. Homodimer. Mg(2+) is required as a cofactor.

The enzyme catalyses hydrogenselenide + ATP + H2O = selenophosphate + AMP + phosphate + 2 H(+). Its function is as follows. Synthesizes selenophosphate from selenide and ATP. In Shigella flexneri serotype 5b (strain 8401), this protein is Selenide, water dikinase.